The primary structure comprises 526 residues: GMP synthase [glutamine-hydrolyzing] (526 aa).

The Glutamine amidotransferase type-1 domain maps to 9 to 207; it reads RILILNFGSQ…VLDICSCQGR (199 aa). Cysteine 86 acts as the Nucleophile in catalysis. Active-site residues include histidine 181 and glutamate 183. The GMPS ATP-PPase domain maps to 208–401; it reads WTPNNIKENI…LGLPFHMLYR (194 aa). 235–241 is an ATP binding site; that stretch reads SGGVDST.

In terms of assembly, homodimer.

The enzyme catalyses XMP + L-glutamine + ATP + H2O = GMP + L-glutamate + AMP + diphosphate + 2 H(+). Its pathway is purine metabolism; GMP biosynthesis; GMP from XMP (L-Gln route): step 1/1. Catalyzes the synthesis of GMP from XMP. This chain is GMP synthase [glutamine-hydrolyzing], found in Baumannia cicadellinicola subsp. Homalodisca coagulata.